A 198-amino-acid chain; its full sequence is Pyridoxine/pyridoxamine 5'-phosphate oxidase 2 (198 aa).

FMN is bound by residues R42, 59–60 (NT), K66, and 121–122 (RS).

Belongs to the pyridoxamine 5'-phosphate oxidase family. As to quaternary structure, homodimer. FMN serves as cofactor.

It catalyses the reaction pyridoxamine 5'-phosphate + O2 + H2O = pyridoxal 5'-phosphate + H2O2 + NH4(+). The catalysed reaction is pyridoxine 5'-phosphate + O2 = pyridoxal 5'-phosphate + H2O2. It functions in the pathway cofactor metabolism; pyridoxal 5'-phosphate salvage; pyridoxal 5'-phosphate from pyridoxamine 5'-phosphate: step 1/1. The protein operates within cofactor metabolism; pyridoxal 5'-phosphate salvage; pyridoxal 5'-phosphate from pyridoxine 5'-phosphate: step 1/1. Functionally, catalyzes the oxidation of either pyridoxine 5'-phosphate (PNP) or pyridoxamine 5'-phosphate (PMP) into pyridoxal 5'-phosphate (PLP). Has an in vitro catalytic efficiency for PNP approximately 300-fold lower than that of PPOX1. The chain is Pyridoxine/pyridoxamine 5'-phosphate oxidase 2 (PPOX2) from Arabidopsis thaliana (Mouse-ear cress).